The sequence spans 510 residues: Conditioned medium factor receptor 1 (510 aa).

The Cytoplasmic segment spans residues 1–36; the sequence is MDSKYIQKTLSAITEQITKNAAVQKVLDNKFVKEHK. Residues 37–55 traverse the membrane as a helical segment; the sequence is YAAAAATVGLGVVAATTIV. The Extracellular portion of the chain corresponds to 56 to 510; that stretch reads KAVNCEGKRY…QGKKQIKKLD (455 aa).

It is found in the membrane. Its function is as follows. Receptor for cmfA, that appears to mediate the G-independent cmfA signal transduction. This Dictyostelium discoideum (Social amoeba) protein is Conditioned medium factor receptor 1 (cmfB).